Consider the following 316-residue polypeptide: Aspartate carbamoyltransferase catalytic subunit (316 aa).

Carbamoyl phosphate is bound by residues arginine 56 and threonine 57. Residue lysine 84 coordinates L-aspartate. 3 residues coordinate carbamoyl phosphate: arginine 106, histidine 139, and glutamine 142. Residues arginine 172 and arginine 226 each contribute to the L-aspartate site. Residues glycine 267 and proline 268 each contribute to the carbamoyl phosphate site.

Belongs to the aspartate/ornithine carbamoyltransferase superfamily. ATCase family. Heterododecamer (2C3:3R2) of six catalytic PyrB chains organized as two trimers (C3), and six regulatory PyrI chains organized as three dimers (R2).

It carries out the reaction carbamoyl phosphate + L-aspartate = N-carbamoyl-L-aspartate + phosphate + H(+). It functions in the pathway pyrimidine metabolism; UMP biosynthesis via de novo pathway; (S)-dihydroorotate from bicarbonate: step 2/3. Its function is as follows. Catalyzes the condensation of carbamoyl phosphate and aspartate to form carbamoyl aspartate and inorganic phosphate, the committed step in the de novo pyrimidine nucleotide biosynthesis pathway. In Mycobacterium sp. (strain JLS), this protein is Aspartate carbamoyltransferase catalytic subunit.